Reading from the N-terminus, the 142-residue chain is Putative pre-16S rRNA nuclease (142 aa).

The protein belongs to the YqgF nuclease family.

It is found in the cytoplasm. Its function is as follows. Could be a nuclease involved in processing of the 5'-end of pre-16S rRNA. This chain is Putative pre-16S rRNA nuclease, found in Lawsonia intracellularis (strain PHE/MN1-00).